Here is a 412-residue protein sequence, read N- to C-terminus: Serine hydroxymethyltransferase (412 aa).

(6S)-5,6,7,8-tetrahydrofolate contacts are provided by residues Leu-117 and 121–123 (GHL). N6-(pyridoxal phosphate)lysine is present on Lys-226. Residue 349 to 351 (SPF) participates in (6S)-5,6,7,8-tetrahydrofolate binding.

It belongs to the SHMT family. Homodimer. The cofactor is pyridoxal 5'-phosphate.

It is found in the cytoplasm. It carries out the reaction (6R)-5,10-methylene-5,6,7,8-tetrahydrofolate + glycine + H2O = (6S)-5,6,7,8-tetrahydrofolate + L-serine. It functions in the pathway one-carbon metabolism; tetrahydrofolate interconversion. The protein operates within amino-acid biosynthesis; glycine biosynthesis; glycine from L-serine: step 1/1. Functionally, catalyzes the reversible interconversion of serine and glycine with tetrahydrofolate (THF) serving as the one-carbon carrier. This reaction serves as the major source of one-carbon groups required for the biosynthesis of purines, thymidylate, methionine, and other important biomolecules. Also exhibits THF-independent aldolase activity toward beta-hydroxyamino acids, producing glycine and aldehydes, via a retro-aldol mechanism. The protein is Serine hydroxymethyltransferase of Oleidesulfovibrio alaskensis (strain ATCC BAA-1058 / DSM 17464 / G20) (Desulfovibrio alaskensis).